The following is a 352-amino-acid chain: MKNKNLSMPSLKEKLLQETVEHIDITRFDARPIIDAMDHMSFTSRDLARATQIFNRMLQDEQCSIILSLAGSTSAGGCMKLYADLVKYNMVDAIVATGASIVDMDFFEALGFRHYQGSPAVEDRQLRDLYIDRIYDTYIDEEDLQRCDHTIYEIANSLEPRPYSSREFIHHMGAYLAQGKAKKEESLVQLAYEHDVPIFCPAFTDSSAGFGLVLHQVKNPDRHLTIDSIRDFRELTDIKIKAGTTGLLMIGGGVPKNFVQDTVVCAEVIGKTVDMHKYAIQITVADVRDGACSSSTLKEACSWGKVDTAYEQMVYAEATSGLPLLASDAYHRGYWKDRSPRQYANLFKSESK.

This sequence belongs to the deoxyhypusine synthase family.

The polypeptide is Deoxyhypusine synthase-like protein (Coxiella burnetii (strain Dugway 5J108-111)).